The sequence spans 606 residues: Pescadillo homolog (606 aa).

One can recognise a BRCT domain in the interval 346 to 447; sequence LSTSLFSPYT…KILLEGPYGQ (102 aa). The tract at residues 461 to 497 is disordered; it reads YEGAYDPAAGPLGPSGVEQESESEADEVSEEDEEDQG. Residues 479–496 show a composition bias toward acidic residues; it reads QESESEADEVSEEDEEDQ.

This sequence belongs to the pescadillo family. In terms of assembly, component of the NOP7 complex, composed of ERB1, NOP7 and YTM1. The complex is held together by ERB1, which interacts with NOP7 via its N-terminal domain and with YTM1 via a high-affinity interaction between the seven-bladed beta-propeller domains of the 2 proteins. The NOP7 complex associates with the 66S pre-ribosome.

It localises to the nucleus. It is found in the nucleolus. Its subcellular location is the nucleoplasm. Component of the NOP7 complex, which is required for maturation of the 25S and 5.8S ribosomal RNAs and formation of the 60S ribosome. The polypeptide is Pescadillo homolog (Laccaria bicolor (strain S238N-H82 / ATCC MYA-4686) (Bicoloured deceiver)).